We begin with the raw amino-acid sequence, 390 residues long: Transcription factor bHLH76 (390 aa).

Residues 147–217 form a disordered region; the sequence is NVSEDSQSSG…SEKQPSDSLK (71 aa). Over residues 207 to 217 the composition is skewed to basic and acidic residues; sequence NSEKQPSDSLK. In terms of domain architecture, bHLH spans 229-279; that stretch reads QATNSHSLAERVRREKISERMKFLQDLVPGCDKVTGKAVMLDEIINYVQSL.

As to quaternary structure, homodimer. Interacts with IBH1. Binds reversibly to CRY2 after blue light illumination. As to expression, expressed constitutively in roots, leaves, stems, and flowers.

It localises to the nucleus. In terms of biological role, transcriptional activator involved in cell elongation. Regulates the expression of a subset of genes involved in cell expansion by binding to the G-box motif. Binds to chromatin DNA of the FT gene and promotes its expression, and thus triggers flowering in response to blue light. The protein is Transcription factor bHLH76 (BHLH76) of Arabidopsis thaliana (Mouse-ear cress).